We begin with the raw amino-acid sequence, 289 residues long: Vesicular-fusion protein SEC17 (289 aa).

This sequence belongs to the SNAP family.

The protein localises to the membrane. In terms of biological role, required for vesicular transport between the endoplasmic reticulum and the Golgi apparatus. The sequence is that of Vesicular-fusion protein SEC17 (SEC17) from Coprinopsis cinerea (strain Okayama-7 / 130 / ATCC MYA-4618 / FGSC 9003) (Inky cap fungus).